A 264-amino-acid chain; its full sequence is Matrilysin (264 aa).

The N-terminal stretch at 1-17 is a signal peptide; the sequence is MQLTLFCFVCLLPGHLA. The propeptide at 18–94 is activation peptide; sequence LPLSQEAGDV…PRCGVPDVAE (77 aa). The Cysteine switch signature appears at 85–92; the sequence is PRCGVPDV. Residue cysteine 87 participates in Zn(2+) binding. Ca(2+) is bound at residue aspartate 153. The Zn(2+) site is built by histidine 163 and aspartate 165. Ca(2+)-binding residues include aspartate 170, glycine 171, glycine 173, and threonine 175. A Zn(2+)-binding site is contributed by histidine 178. Ca(2+) is bound by residues glycine 185, glycine 187, and aspartate 189. Histidine 191 serves as a coordination point for Zn(2+). The Ca(2+) site is built by aspartate 193 and glutamate 196. Residue histidine 214 participates in Zn(2+) binding. Glutamate 215 is an active-site residue. Residues histidine 218 and histidine 224 each coordinate Zn(2+).

This sequence belongs to the peptidase M10A family. Ca(2+) is required as a cofactor. Requires Zn(2+) as cofactor. Expressed in the intestinal epithelium (at protein level).

The protein localises to the secreted. Its subcellular location is the extracellular space. It is found in the extracellular matrix. It carries out the reaction Cleavage of 14-Ala-|-Leu-15 and 16-Tyr-|-Leu-17 in B chain of insulin. No action on collagen types I, II, IV, V. Cleaves gelatin chain alpha2(I) &gt; alpha1(I).. Functionally, degrades casein, gelatins of types I, III, IV, and V, and fibronectin. Activates procollagenase. In terms of biological role, may play a role in tissue reorganization. The protein is Matrilysin (Mmp7) of Mus musculus (Mouse).